We begin with the raw amino-acid sequence, 636 residues long: 1-deoxy-D-xylulose-5-phosphate synthase (636 aa).

Thiamine diphosphate contacts are provided by residues histidine 73 and 114-116 (SHA). Aspartate 146 contributes to the Mg(2+) binding site. Thiamine diphosphate-binding positions include 147–148 (GA), asparagine 176, tyrosine 287, and glutamate 368. Asparagine 176 lines the Mg(2+) pocket.

It belongs to the transketolase family. DXPS subfamily. In terms of assembly, homodimer. The cofactor is Mg(2+). Requires thiamine diphosphate as cofactor.

The catalysed reaction is D-glyceraldehyde 3-phosphate + pyruvate + H(+) = 1-deoxy-D-xylulose 5-phosphate + CO2. It functions in the pathway metabolic intermediate biosynthesis; 1-deoxy-D-xylulose 5-phosphate biosynthesis; 1-deoxy-D-xylulose 5-phosphate from D-glyceraldehyde 3-phosphate and pyruvate: step 1/1. Its function is as follows. Catalyzes the acyloin condensation reaction between C atoms 2 and 3 of pyruvate and glyceraldehyde 3-phosphate to yield 1-deoxy-D-xylulose-5-phosphate (DXP). This Corynebacterium glutamicum (strain ATCC 13032 / DSM 20300 / JCM 1318 / BCRC 11384 / CCUG 27702 / LMG 3730 / NBRC 12168 / NCIMB 10025 / NRRL B-2784 / 534) protein is 1-deoxy-D-xylulose-5-phosphate synthase.